The following is a 479-amino-acid chain: F-box protein SKIP17 (479 aa).

In terms of domain architecture, F-box spans 92–138 (NSNSWSLPPELTIKVFSMLDTKSMMQAAVCCTMFNKCAMDRLCYSHI). The interval 435 to 479 (EMMEAEDDEVDEEDDSDDDTDDVSDEDESENDDDMGMGFDVDYLL) is disordered. Acidic residues predominate over residues 437–469 (MEAEDDEVDEEDDSDDDTDDVSDEDESENDDDM).

In terms of assembly, part of a SCF (ASK-cullin-F-box) protein ligase complex. Interacts with SPK1B/ASK2.

The protein localises to the nucleus. It participates in protein modification; protein ubiquitination. In terms of biological role, component of SCF(ASK-cullin-F-box) E3 ubiquitin ligase complexes, which may mediate the ubiquitination and subsequent proteasomal degradation of target proteins. The polypeptide is F-box protein SKIP17 (SKIP17) (Arabidopsis thaliana (Mouse-ear cress)).